The primary structure comprises 429 residues: MDVNMAAELSPTNSSSSGELSVSPEPPRETQAFLGKVTVIDYFTFQHKHLKVTNIDDMTETLYVKLPENMTRCDHLPITCEYLLGRGSYGAVYAHADNATVKLYDSVTELYHELMVCDMIQIGKATAEDGQDKALVDYLSACTSCHALFMPQFRCSLQDYGHWHDGSIEPLVRGFQGLKDAVYFLNRHCGLFHSDISPSNILVDFTDTMWGMGRLVLTDYGTASLHDRNKMLDVRLKSSKGRQLYRLYCQREPFSIAKDTYKPLCLLSKCYILRGAGHIPDPSACGPVGAQTALRLDLQSLGYSLLYGIMHLADSTHKIPYPNPDMGFDRSDPLYFLQFAAPKVVLLEVLSQMWNLNLDMGLTSCGESPCVDVTAEHMSQFLQWCRSLKKRFKESYFFNCRPRFEHPHLPGLVAELLADDFFGPDGRRG.

The interval 1-27 is disordered; the sequence is MDVNMAAELSPTNSSSSGELSVSPEPP. Residues 1 to 409 enclose the Protein kinase domain; the sequence is MDVNMAAELS…CRPRFEHPHL (409 aa). The span at 14–23 shows a compositional bias: low complexity; that stretch reads SSSSGELSVS. Residues 36-40 form an SUMO interaction motif region; it reads KVTVI. ATP is bound by residues 110–118 and Glu-128; that span reads LYHELMVCD. The Proton acceptor role is filled by Asp-195. Residues 344–350 are SUMO interaction motif; that stretch reads VVLLEVL.

This sequence belongs to the protein kinase superfamily. Ser/Thr protein kinase family. Interacts with host NUP62 and NUP153; this interaction plays a role in nuclear targeting of BGLF4. Interacts with host SUMO1 and SUMO2.

The protein localises to the virion tegument. Its subcellular location is the host nucleus. The catalysed reaction is L-seryl-[protein] + ATP = O-phospho-L-seryl-[protein] + ADP + H(+). The enzyme catalyses L-threonyl-[protein] + ATP = O-phospho-L-threonyl-[protein] + ADP + H(+). Functionally, plays many key roles by phosphorylating several proteins including the viral DNA processivity factor BMRF1, EBNA1 or EBNA2. Modifies the host nuclear envelope structure and induces the redistribution of nuclear envelope-associated proteins by phosphorylating host nucleoporins. Subsequently, promotes the nuclear transport of EBV lytic proteins. Required for efficient lytic DNA replication and release of nucleocapsids from the nucleus. Contributes to the compaction of host cell chromatin in cells undergoing lytic replication, presumably by phosphorylating the host condensin complex and host TOP2A. Induces disassembly of the nuclear lamina by phosphorylating with host LMNA. Phosphorylates substrates involved in capsid assembly and DNA packaging. Facilitates the switch from latent to lytic DNA replication by down-regulating EBNA1 replication function. Phosphorylates the viral immediate-early protein BZLF1 and inhibits its sumoylation by interacting with host SUMO1 and SUMO2. Phosphorylates also host SAMHD1 and thereby counteracts its antiviral effect by reducing its dNTP hydrolase activity. The polypeptide is Serine/threonine-protein kinase BGLF4 (Epstein-Barr virus (strain AG876) (HHV-4)).